Here is a 305-residue protein sequence, read N- to C-terminus: Acetyl-coenzyme A carboxylase carboxyl transferase subunit alpha (305 aa).

A CoA carboxyltransferase C-terminal domain is found at 33–280 (AKLESSTALS…KEQILKDLAD (248 aa)).

This sequence belongs to the AccA family. In terms of assembly, acetyl-CoA carboxylase is a heterohexamer composed of biotin carboxyl carrier protein (AccB), biotin carboxylase (AccC) and two subunits each of ACCase subunit alpha (AccA) and ACCase subunit beta (AccD).

The protein resides in the cytoplasm. The catalysed reaction is N(6)-carboxybiotinyl-L-lysyl-[protein] + acetyl-CoA = N(6)-biotinyl-L-lysyl-[protein] + malonyl-CoA. It participates in lipid metabolism; malonyl-CoA biosynthesis; malonyl-CoA from acetyl-CoA: step 1/1. Its function is as follows. Component of the acetyl coenzyme A carboxylase (ACC) complex. First, biotin carboxylase catalyzes the carboxylation of biotin on its carrier protein (BCCP) and then the CO(2) group is transferred by the carboxyltransferase to acetyl-CoA to form malonyl-CoA. The sequence is that of Acetyl-coenzyme A carboxylase carboxyl transferase subunit alpha from Treponema denticola (strain ATCC 35405 / DSM 14222 / CIP 103919 / JCM 8153 / KCTC 15104).